Reading from the N-terminus, the 194-residue chain is Glycerol-3-phosphate acyltransferase (194 aa).

5 helical membrane-spanning segments follow: residues 4-24 (ELIL…LLLA), 80-100 (WVAA…FLGF), 112-132 (VFLG…IGIV), 137-157 (YISL…AAVE), and 161-181 (LLVG…RENI).

It belongs to the PlsY family. In terms of assembly, probably interacts with PlsX.

Its subcellular location is the cell inner membrane. It carries out the reaction an acyl phosphate + sn-glycerol 3-phosphate = a 1-acyl-sn-glycero-3-phosphate + phosphate. It participates in lipid metabolism; phospholipid metabolism. Functionally, catalyzes the transfer of an acyl group from acyl-phosphate (acyl-PO(4)) to glycerol-3-phosphate (G3P) to form lysophosphatidic acid (LPA). This enzyme utilizes acyl-phosphate as fatty acyl donor, but not acyl-CoA or acyl-ACP. The chain is Glycerol-3-phosphate acyltransferase from Geobacter sulfurreducens (strain ATCC 51573 / DSM 12127 / PCA).